The sequence spans 275 residues: Shikimate dehydrogenase (NADP(+)) (275 aa).

Shikimate is bound by residues 19–21 (SIS) and Thr-66. Catalysis depends on Lys-70, which acts as the Proton acceptor. Glu-82 provides a ligand contact to NADP(+). Residues Asn-91 and Asp-106 each contribute to the shikimate site. NADP(+)-binding positions include 129–133 (GAGGA), 153–158 (NRTYER), and Ile-219. Tyr-221 contacts shikimate. Gly-242 provides a ligand contact to NADP(+).

This sequence belongs to the shikimate dehydrogenase family. In terms of assembly, homodimer.

It catalyses the reaction shikimate + NADP(+) = 3-dehydroshikimate + NADPH + H(+). It participates in metabolic intermediate biosynthesis; chorismate biosynthesis; chorismate from D-erythrose 4-phosphate and phosphoenolpyruvate: step 4/7. Functionally, involved in the biosynthesis of the chorismate, which leads to the biosynthesis of aromatic amino acids. Catalyzes the reversible NADPH linked reduction of 3-dehydroshikimate (DHSA) to yield shikimate (SA). The protein is Shikimate dehydrogenase (NADP(+)) of Dictyoglomus turgidum (strain DSM 6724 / Z-1310).